The primary structure comprises 549 residues: Probable protein kinase UbiB (549 aa).

In terms of domain architecture, Protein kinase spans 123–501; sequence DFNEIPLASA…QQQAHKSNYL (379 aa). Residues 129–137 and K152 each bind ATP; that span reads LASASISQV. The Proton acceptor role is filled by D287. The next 2 helical transmembrane spans lie at 496–516 and 520–540; these read HKSN…TLLI and ATLW…FVGW.

It belongs to the ABC1 family. UbiB subfamily.

It is found in the cell inner membrane. Its pathway is cofactor biosynthesis; ubiquinone biosynthesis [regulation]. Is probably a protein kinase regulator of UbiI activity which is involved in aerobic coenzyme Q (ubiquinone) biosynthesis. In Shewanella baltica (strain OS223), this protein is Probable protein kinase UbiB.